An 85-amino-acid polypeptide reads, in one-letter code: Cell division topological specificity factor (85 aa).

It belongs to the MinE family.

In terms of biological role, prevents the cell division inhibition by proteins MinC and MinD at internal division sites while permitting inhibition at polar sites. This ensures cell division at the proper site by restricting the formation of a division septum at the midpoint of the long axis of the cell. The polypeptide is Cell division topological specificity factor (Xylella fastidiosa (strain M12)).